A 346-amino-acid polypeptide reads, in one-letter code: Dimethyladenosine transferase 1, mitochondrial (346 aa).

The transit peptide at 1–27 (MATQGVLAKYRLPPLPTIGEIIKLFNL) directs the protein to the mitochondrion. S-adenosyl-L-methionine-binding residues include N36, L38, G63, E85, K86, D111, I112, and N141.

This sequence belongs to the class I-like SAM-binding methyltransferase superfamily. rRNA adenine N(6)-methyltransferase family. KsgA subfamily.

It is found in the mitochondrion. The catalysed reaction is adenosine(N)/adenosine(N+1) in rRNA + 4 S-adenosyl-L-methionine = N(6)-dimethyladenosine(N)/N(6)-dimethyladenosine(N+1) in rRNA + 4 S-adenosyl-L-homocysteine + 4 H(+). Its function is as follows. Mitochondrial methyltransferase which uses S-adenosyl methionine to dimethylate two highly conserved adjacent adenosine residues (A1583 and A1584) within the loop of helix 45 at the 3-prime end of 12S rRNA, thereby regulating the assembly or stability of the small subunit of the mitochondrial ribosome. Also required for basal transcription of mitochondrial DNA, probably via its interaction with POLRMT and TFAM. Stimulates transcription independently of the methyltransferase activity. This Xenopus tropicalis (Western clawed frog) protein is Dimethyladenosine transferase 1, mitochondrial (tfb1m).